The chain runs to 90 residues: Probable Fe(2+)-trafficking protein (90 aa).

It belongs to the Fe(2+)-trafficking protein family.

Functionally, could be a mediator in iron transactions between iron acquisition and iron-requiring processes, such as synthesis and/or repair of Fe-S clusters in biosynthetic enzymes. The protein is Probable Fe(2+)-trafficking protein of Paraburkholderia xenovorans (strain LB400).